The primary structure comprises 357 residues: Cobalt-precorrin-5B C(1)-methyltransferase (357 aa).

This sequence belongs to the CbiD family.

The enzyme catalyses Co-precorrin-5B + S-adenosyl-L-methionine = Co-precorrin-6A + S-adenosyl-L-homocysteine. It functions in the pathway cofactor biosynthesis; adenosylcobalamin biosynthesis; cob(II)yrinate a,c-diamide from sirohydrochlorin (anaerobic route): step 6/10. In terms of biological role, catalyzes the methylation of C-1 in cobalt-precorrin-5B to form cobalt-precorrin-6A. This chain is Cobalt-precorrin-5B C(1)-methyltransferase, found in Paramagnetospirillum magneticum (strain ATCC 700264 / AMB-1) (Magnetospirillum magneticum).